A 341-amino-acid chain; its full sequence is Aspartate carbamoyltransferase catalytic subunit (341 aa).

Carbamoyl phosphate contacts are provided by Arg74 and Thr75. Lys102 serves as a coordination point for L-aspartate. Residues Arg124, His152, and Gln155 each contribute to the carbamoyl phosphate site. Positions 190 and 244 each coordinate L-aspartate. Carbamoyl phosphate contacts are provided by Gly285 and Pro286.

Belongs to the aspartate/ornithine carbamoyltransferase superfamily. ATCase family. Heterododecamer (2C3:3R2) of six catalytic PyrB chains organized as two trimers (C3), and six regulatory PyrI chains organized as three dimers (R2).

The enzyme catalyses carbamoyl phosphate + L-aspartate = N-carbamoyl-L-aspartate + phosphate + H(+). It participates in pyrimidine metabolism; UMP biosynthesis via de novo pathway; (S)-dihydroorotate from bicarbonate: step 2/3. Catalyzes the condensation of carbamoyl phosphate and aspartate to form carbamoyl aspartate and inorganic phosphate, the committed step in the de novo pyrimidine nucleotide biosynthesis pathway. In Novosphingobium aromaticivorans (strain ATCC 700278 / DSM 12444 / CCUG 56034 / CIP 105152 / NBRC 16084 / F199), this protein is Aspartate carbamoyltransferase catalytic subunit.